The following is a 449-amino-acid chain: Heterogeneous nuclear ribonucleoprotein H2 (449 aa).

Methionine 1 is subject to N-acetylmethionine. Residue methionine 2 is modified to N-acetylmethionine; in Heterogeneous nuclear ribonucleoprotein H2, N-terminally processed. Residues 11-90 (FVVKVRGLPW…RYVEVFKSNS (80 aa)) enclose the RRM 1 domain. A Phosphoserine modification is found at serine 23. Residue lysine 35 forms a Glycyl lysine isopeptide (Lys-Gly) (interchain with G-Cter in SUMO2) linkage. Phosphoserine is present on residues serine 54 and serine 63. Lysine 87 is covalently cross-linked (Glycyl lysine isopeptide (Lys-Gly) (interchain with G-Cter in SUMO2)). Position 90 is a phosphoserine (serine 90). A Glycyl lysine isopeptide (Lys-Gly) (interchain with G-Cter in SUMO2) cross-link involves residue lysine 98. One can recognise an RRM 2 domain in the interval 111-188 (GFVRLRGLPF…RYIEIFKSSR (78 aa)). Residue arginine 233 is modified to Dimethylated arginine; alternate. Arginine 233 carries the omega-N-methylarginine; alternate modification. One copy of the 1-1 repeat lies at 234-249 (GAYGGGYGGYDDYGGY). The tract at residues 234 to 433 (GAYGGGYGGY…YGGQSSMSGY (200 aa)) is 2 X 16 AA Gly-rich approximate repeats. The residue at position 246 (tyrosine 246) is a Phosphotyrosine. One can recognise an RRM 3 domain in the interval 289–364 (HCVHMRGLPY…RYVELFLNST (76 aa)). A Phosphoserine modification is found at serine 310. 3 consecutive repeat copies span residues 354 to 372 (HRYVELFLNSTAGTSGGAY), 374 to 392 (HSYVELFLNSTAGASGGAY), and 418 to 433 (GGYGGGYGGQSSMSGY). A 2 X 19 AA perfect repeats region spans residues 354–392 (HRYVELFLNSTAGTSGGAYDHSYVELFLNSTAGASGGAY).

As to quaternary structure, component of a ribonucleoprotein complex containing mRNAs and RNA-binding proteins including DDX5, HNRNPH2 and SRSF1 as well as splicing regulator ARVCF. Interacts with TXNL4/DIM1. In terms of tissue distribution, expressed ubiquitously.

Its subcellular location is the nucleus. It is found in the nucleoplasm. Functionally, this protein is a component of the heterogeneous nuclear ribonucleoprotein (hnRNP) complexes which provide the substrate for the processing events that pre-mRNAs undergo before becoming functional, translatable mRNAs in the cytoplasm. Binds poly(RG). In Homo sapiens (Human), this protein is Heterogeneous nuclear ribonucleoprotein H2 (HNRNPH2).